A 116-amino-acid polypeptide reads, in one-letter code: uncharacterized protein (116 aa).

Residues 76 to 116 (VPPPRYSYIRSESSRNNLRNSARNQPQNLVSEQDSDSNREN) form a disordered region. Residues 85-99 (RSESSRNNLRNSARN) show a composition bias toward low complexity.

This is an uncharacterized protein from Glycine max (Soybean).